The primary structure comprises 341 residues: Peroxisomal membrane protein PEX14 (341 aa).

Serine 2 carries the post-translational modification N-acetylserine. The short motif at 86 to 94 is the SH3-binding element; the sequence is PPTLPHRDW. Residues 276–341 are disordered; the sequence is MQEESDKEKE…QNGQVEDSIP (66 aa). The span at 279-295 shows a compositional bias: basic and acidic residues; it reads ESDKEKENGSDANKDDN. A compositionally biased stretch (polar residues) spans 308 to 341; it reads IDSNASIPEWQKNTAANEISVPDWQNGQVEDSIP. A Phosphoserine modification is found at serine 313.

It belongs to the peroxin-14 family. As to quaternary structure, interacts with PEX13 (via SH3 domain); forming the PEX13-PEX14 docking complex. Interacts with PEX5 (via WxxxF/Y motifs). Interacts with PEX7. Interacts with PEX9.

The protein localises to the peroxisome membrane. Component of the PEX13-PEX14 docking complex, a translocon channel that specifically mediates the import of peroxisomal cargo proteins bound to PEX5 or PEX21 receptors. The PEX13-PEX14 docking complex forms a large import pore which can be opened to a diameter of about 9 nm. Mechanistically, PEX5 (or PEX21) receptor along with cargo proteins associates with the PEX14 subunit of the PEX13-PEX14 docking complex in the cytosol, leading to the insertion of the receptor into the organelle membrane with the concomitant translocation of the cargo into the peroxisome matrix. The chain is Peroxisomal membrane protein PEX14 from Saccharomyces cerevisiae (strain ATCC 204508 / S288c) (Baker's yeast).